Reading from the N-terminus, the 198-residue chain is dCTP deaminase (198 aa).

DCTP-binding positions include 110 to 115, Asp128, 136 to 138, Tyr171, Lys178, and Gln182; these read RSSLAR and VLE. The Proton donor/acceptor role is filled by Glu138. The disordered stretch occupies residues 168–198; sequence ARPYNKREDAKYRDQKGAVASRISQDEKVNK. Residues 172 to 183 are compositionally biased toward basic and acidic residues; sequence NKREDAKYRDQK.

It belongs to the dCTP deaminase family. Homotrimer.

It carries out the reaction dCTP + H2O + H(+) = dUTP + NH4(+). It participates in pyrimidine metabolism; dUMP biosynthesis; dUMP from dCTP (dUTP route): step 1/2. Functionally, catalyzes the deamination of dCTP to dUTP. This chain is dCTP deaminase, found in Colwellia psychrerythraea (strain 34H / ATCC BAA-681) (Vibrio psychroerythus).